A 366-amino-acid chain; its full sequence is ATP-dependent 6-phosphofructokinase (366 aa).

ATP contacts are provided by residues Gly16, 78-79 (RE), and 118-121 (GNGT). Residues 74–94 (LGTSREKPFKPDPGEKDSEAG) are disordered. Residues 77-94 (SREKPFKPDPGEKDSEAG) show a composition bias toward basic and acidic residues. Asn119 is a Mg(2+) binding site. Substrate contacts are provided by residues 141 to 143 (TID), Arg178, 185 to 187 (MGH), Glu238, Arg282, and 288 to 291 (YLQR). The active-site Proton acceptor is the Asp143.

Belongs to the phosphofructokinase type A (PFKA) family. Mixed-substrate PFK group III subfamily. Homodimer or homotetramer. Mg(2+) serves as cofactor.

The protein resides in the cytoplasm. It carries out the reaction beta-D-fructose 6-phosphate + ATP = beta-D-fructose 1,6-bisphosphate + ADP + H(+). It participates in carbohydrate degradation; glycolysis; D-glyceraldehyde 3-phosphate and glycerone phosphate from D-glucose: step 3/4. Its function is as follows. Catalyzes the phosphorylation of D-fructose 6-phosphate to fructose 1,6-bisphosphate by ATP, the first committing step of glycolysis. This is ATP-dependent 6-phosphofructokinase from Spirochaeta thermophila (strain ATCC 49972 / DSM 6192 / RI 19.B1).